The primary structure comprises 167 residues: Translation initiation factor IF-3 (167 aa).

It belongs to the IF-3 family. As to quaternary structure, monomer.

It is found in the cytoplasm. Functionally, IF-3 binds to the 30S ribosomal subunit and shifts the equilibrium between 70S ribosomes and their 50S and 30S subunits in favor of the free subunits, thus enhancing the availability of 30S subunits on which protein synthesis initiation begins. This is Translation initiation factor IF-3 from Bacillus cereus (strain ATCC 14579 / DSM 31 / CCUG 7414 / JCM 2152 / NBRC 15305 / NCIMB 9373 / NCTC 2599 / NRRL B-3711).